We begin with the raw amino-acid sequence, 80 residues long: Metallothionein-like protein BIF98 (80 aa).

This sequence belongs to the metallothionein superfamily. Type 15 family.

Functionally, metallothioneins have a high content of cysteine residues that bind various heavy metals. The sequence is that of Metallothionein-like protein BIF98 from Brassica rapa subsp. pekinensis (Chinese cabbage).